The primary structure comprises 774 residues: Cleavage and polyadenylation specificity factor subunit 3 (774 aa).

A compositionally biased stretch (basic residues) spans 1 to 26; sequence MHHNNHHHGHHGRYQHHHNQHLKRPL. A disordered region spans residues 1 to 30; sequence MHHNNHHHGHHGRYQHHHNQHLKRPLKGGT. Residues H97, H99, D101, H102, H185, and D206 each contribute to the Zn(2+) site. Residue H423 is the Proton donor of the active site. Position 445 (H445) interacts with Zn(2+). The disordered stretch occupies residues 636-665; that stretch reads KEEITKDDIEKEKEKEKEQQDGDDDDDDEI. Over residues 638–655 the composition is skewed to basic and acidic residues; it reads EITKDDIEKEKEKEKEQQ.

The protein belongs to the metallo-beta-lactamase superfamily. RNA-metabolizing metallo-beta-lactamase-like family. CPSF3 subfamily. As to quaternary structure, component of the cleavage and polyadenylation specificity factor (CPSF) complex. Zn(2+) serves as cofactor.

The protein resides in the nucleus. Component of the cleavage and polyadenylation specificity factor (CPSF) complex that play a key role in pre-mRNA 3'-end formation, recognizing the AAUAAA signal sequence and interacting with poly(A) polymerase and other factors to bring about cleavage and poly(A) addition. Has endonuclease activity, and functions as an mRNA 3'-end-processing endonuclease. The protein is Cleavage and polyadenylation specificity factor subunit 3 (cpsf3) of Dictyostelium discoideum (Social amoeba).